A 420-amino-acid chain; its full sequence is Putative zinc metalloprotease Lmo1318 (420 aa).

H18 serves as a coordination point for Zn(2+). Residue E19 is part of the active site. H22 contributes to the Zn(2+) binding site. Helical transmembrane passes span 172 to 194 (TIFAGPLFNFILAILIFTALAFV), 304 to 326 (NWIVQIFTILGNMFTGGFSLDML), 347 to 369 (VLNWTAVLSINLGIVNLLPLPAL), and 393 to 412 (GIIHFAGFALLMVLMILVTW). Positions 176 to 267 (GPLFNFILAI…DGKTQDIDVK (92 aa)) constitute a PDZ domain.

The protein belongs to the peptidase M50B family. The cofactor is Zn(2+).

It localises to the cell membrane. The sequence is that of Putative zinc metalloprotease Lmo1318 from Listeria monocytogenes serovar 1/2a (strain ATCC BAA-679 / EGD-e).